We begin with the raw amino-acid sequence, 461 residues long: O-methyltransferase CTB2 (461 aa).

Asp288 contributes to the S-adenosyl-L-methionine binding site. The active-site Proton acceptor is His339.

Belongs to the class I-like SAM-binding methyltransferase superfamily. Cation-independent O-methyltransferase family. COMT subfamily.

It functions in the pathway mycotoxin biosynthesis. Its function is as follows. O-methyltransferase; part of the gene cluster that mediates the biosynthesis of cercosporin, a light-activated, non-host-selective toxin. The perylenequinone chromophore of cercosporin absorbs light energy to attain an electronically-activated triplet state and produces active oxygen species such as the hydroxyl radical, superoxide, hydrogen peroxide or singlet oxygen upon reaction with oxygen molecules. These reactive oxygen species cause damage to various cellular components including lipids, proteins and nucleic acids. The first step of cercosporin biosynthesis is performed by the polyketide synthase CTB1 which catalyzes the formation of nor-toralactone. The starter unit acyltransferase (SAT) domain of CTB1 initiates polyketide extension by the selective utilization of acetyl-CoA, which is elongated to the heptaketide in the beta-ketoacyl synthase (KS) domain by successive condensations with six malonyl units introduced by the malonyl acyltransferase (MAT) domain. The product template (PT) domain catalyzes C4-C9 and C2-C11 aldol cyclizations and dehydrations to a trihydroxynaphthalene, which is thought to be delivered to the thioesterase (TE) domain for product release. The bifunctional enzyme CTB3 then methylates nor-toralactone to toralactone before conducting an unusual oxidative aromatic ring opening. The O-methyltransferase CTB2 further methylates the nascent OH-6 of the CBT3 product, blocking further oxidation at this site before the reductase CTB6 reduces the 2-oxopropyl ketone at position C7, giving naphthalene. The FAD-dependent monooxygenase CTB5 in concert with the multicopper oxidase CTB12 are responsible for homodimerization of naphthalene with CTB7 installing the dioxepine moiety, finally producing cercosporin. The fasciclin domain-containing protein CTB11 might act with CTB5 and CTB12 whereas the roles of CTB9 and CTB10 have still to be elucidated. The sequence is that of O-methyltransferase CTB2 from Cercospora nicotianae (Barn spot disease fungus).